The primary structure comprises 514 residues: 2,3-bisphosphoglycerate-independent phosphoglycerate mutase (514 aa).

Mn(2+) is bound by residues Asp-14 and Ser-64. Ser-64 functions as the Phosphoserine intermediate in the catalytic mechanism. Substrate is bound by residues His-125, 155–156, Arg-187, Arg-193, 263–266, and Lys-336; these read RD and RADR. Mn(2+) is bound by residues Asp-403, His-407, Asp-444, His-445, and His-463.

It belongs to the BPG-independent phosphoglycerate mutase family. As to quaternary structure, monomer. The cofactor is Mn(2+).

It catalyses the reaction (2R)-2-phosphoglycerate = (2R)-3-phosphoglycerate. The protein operates within carbohydrate degradation; glycolysis; pyruvate from D-glyceraldehyde 3-phosphate: step 3/5. Catalyzes the interconversion of 2-phosphoglycerate and 3-phosphoglycerate. In Shewanella putrefaciens (strain CN-32 / ATCC BAA-453), this protein is 2,3-bisphosphoglycerate-independent phosphoglycerate mutase.